We begin with the raw amino-acid sequence, 157 residues long: Protein SINE4 (157 aa).

The KASH domain occupies 104-157; that stretch reads VTSSSDTTKAKKKTTIRRFVSVTMVLLLSWVLVVLMNHFDHLSMNTQIITLVPT. A helical transmembrane segment spans residues 122-142; the sequence is FVSVTMVLLLSWVLVVLMNHF. Residues 154 to 157 carry the Required for nuclear localization motif; the sequence is LVPT.

In terms of assembly, interacts with SUN1 and SUN2.

The protein resides in the nucleus membrane. This Arabidopsis thaliana (Mouse-ear cress) protein is Protein SINE4.